Consider the following 210-residue polypeptide: Large ribosomal subunit protein uL3 (210 aa).

The interval 131–165 (GPMSHGSKYHRRVGSMGATTDPGRTFKGKKMPGRM) is disordered.

The protein belongs to the universal ribosomal protein uL3 family. As to quaternary structure, part of the 50S ribosomal subunit. Forms a cluster with proteins L14 and L19.

One of the primary rRNA binding proteins, it binds directly near the 3'-end of the 23S rRNA, where it nucleates assembly of the 50S subunit. In Caldanaerobacter subterraneus subsp. tengcongensis (strain DSM 15242 / JCM 11007 / NBRC 100824 / MB4) (Thermoanaerobacter tengcongensis), this protein is Large ribosomal subunit protein uL3.